The primary structure comprises 241 residues: ATP synthase subunit a (241 aa).

The next 5 membrane-spanning stretches (helical) occupy residues 30–50, 91–111, 128–148, 193–213, and 214–234; these read GQVF…VVVG, FIGT…LIPW, INTT…AGLS, LVVA…VMFL, and GLFT…YYIG.

The protein belongs to the ATPase A chain family. As to quaternary structure, F-type ATPases have 2 components, CF(1) - the catalytic core - and CF(0) - the membrane proton channel. CF(1) has five subunits: alpha(3), beta(3), gamma(1), delta(1), epsilon(1). CF(0) has four main subunits: a, b, b' and c.

The protein localises to the cellular thylakoid membrane. In terms of biological role, key component of the proton channel; it plays a direct role in the translocation of protons across the membrane. The chain is ATP synthase subunit a from Prochlorococcus marinus (strain SARG / CCMP1375 / SS120).